A 374-amino-acid polypeptide reads, in one-letter code: MLTCIACTKQLNTNNGGSKKQEEDEEEEDRVIETPRSKQIKSLTSQIKDMAVKASGAYKSCKPCSGSSNQNKNRSYADSDVASNSGRFRYAYKRAGSGSSTPKILGKEMESRLKGFLSGEGTPESMSGRTESTVFMEEEDELKEWVAQVEPGVLITFVSLPEGGNDMKRIRFSREMFDKWQAQKWWAENFDKVMELYNVQQFNQQSVPLPTPPRSEDGSSRIQSTKNGPATPPLNKECSRGKGYASSGSLAHQPTTQTQSRHHDSSGLATTPKLSSISGTKTETSSVDESARSSFSREEEEADHSGEELSVSNASDIETEWVEQDEAGVYITIRALPDGTRELRRVRFSREKFGETNARLWWEQNRARIQQQYL.

Disordered regions lie at residues 12 to 43 (NTNN…IKSL) and 57 to 80 (AYKS…ADSD). Residues 65 to 80 (SGSSNQNKNRSYADSD) are compositionally biased toward polar residues. The BRX 1 domain occupies 143-198 (KEWVAQVEPGVLITFVSLPEGGNDMKRIRFSREMFDKWQAQKWWAENFDKVMELYN). A disordered region spans residues 205–316 (QSVPLPTPPR…EELSVSNASD (112 aa)). Composition is skewed to polar residues over residues 246 to 259 (SSGS…TQTQ) and 267 to 288 (GLAT…SSVD). The segment covering 289–307 (ESARSSFSREEEEADHSGE) has biased composition (basic and acidic residues). In terms of domain architecture, BRX 2 spans 319 to 374 (TEWVEQDEAGVYITIRALPDGTRELRRVRFSREKFGETNARLWWEQNRARIQQQYL).

It belongs to the BRX family. In terms of tissue distribution, expressed in roots.

It is found in the nucleus. In Arabidopsis thaliana (Mouse-ear cress), this protein is Protein Brevis radix-like 2 (BRXL2).